The sequence spans 494 residues: Protein DETOXIFICATION 22 (494 aa).

Helical transmembrane passes span 40–60, 78–98, 123–143, 159–179, 188–208, 217–237, 268–288, 299–319, 340–360, 384–404, 416–436, and 441–461; these read LWVV…VSLV, ITFT…ASAL, IVLT…GPIL, IALW…CQIF, IIAY…WLLV, GAMT…LLYV, GGMV…TGNL, AICI…LAAV, IVAV…FLFL, LLAF…VAVG, LACY…VVGL, and VWIG…IMTL.

The protein belongs to the multi antimicrobial extrusion (MATE) (TC 2.A.66.1) family.

The protein resides in the membrane. The sequence is that of Protein DETOXIFICATION 22 from Arabidopsis thaliana (Mouse-ear cress).